A 511-amino-acid chain; its full sequence is Phenylalanine--tRNA ligase alpha subunit (511 aa).

Residues Thr-352, 390–392, Tyr-429, and Phe-455 contribute to the L-phenylalanine site; that span reads QVE.

It belongs to the class-II aminoacyl-tRNA synthetase family. Phe-tRNA synthetase alpha subunit type 2 subfamily. Tetramer of two alpha and two beta subunits. Mg(2+) is required as a cofactor.

The protein localises to the cytoplasm. It carries out the reaction tRNA(Phe) + L-phenylalanine + ATP = L-phenylalanyl-tRNA(Phe) + AMP + diphosphate + H(+). This is Phenylalanine--tRNA ligase alpha subunit from Methanothermobacter thermautotrophicus (strain ATCC 29096 / DSM 1053 / JCM 10044 / NBRC 100330 / Delta H) (Methanobacterium thermoautotrophicum).